A 310-amino-acid chain; its full sequence is tRNA pseudouridine synthase B (310 aa).

Catalysis depends on Asp-47, which acts as the Nucleophile.

Belongs to the pseudouridine synthase TruB family. Type 1 subfamily.

The catalysed reaction is uridine(55) in tRNA = pseudouridine(55) in tRNA. Responsible for synthesis of pseudouridine from uracil-55 in the psi GC loop of transfer RNAs. The sequence is that of tRNA pseudouridine synthase B from Caulobacter sp. (strain K31).